A 157-amino-acid polypeptide reads, in one-letter code: Ribosome-binding factor A (157 aa).

The disordered stretch occupies residues 127–157 (QQQFGSEEASVEDEVLGDDVADDADETEGKD). Residues 135–157 (ASVEDEVLGDDVADDADETEGKD) are compositionally biased toward acidic residues.

Belongs to the RbfA family. In terms of assembly, monomer. Binds 30S ribosomal subunits, but not 50S ribosomal subunits or 70S ribosomes.

It localises to the cytoplasm. One of several proteins that assist in the late maturation steps of the functional core of the 30S ribosomal subunit. Associates with free 30S ribosomal subunits (but not with 30S subunits that are part of 70S ribosomes or polysomes). Required for efficient processing of 16S rRNA. May interact with the 5'-terminal helix region of 16S rRNA. The sequence is that of Ribosome-binding factor A from Shewanella baltica (strain OS195).